Reading from the N-terminus, the 1418-residue chain is Ankyrin repeat and fibronectin type-III domain-containing protein 1 (1418 aa).

The interval 119–236 (RDSVCSLPPP…DRGETPSLSE (118 aa)) is disordered. A compositionally biased stretch (polar residues) spans 144 to 154 (PENTSINLSQC). The segment covering 171–186 (SASPTSSTPLRTTSTP) has biased composition (low complexity). The segment covering 223-236 (LRDHDRGETPSLSE) has biased composition (basic and acidic residues). 2 ANK repeats span residues 419 to 450 (QSSE…ELDL) and 456 to 485 (EGLT…KESP). A Fibronectin type-III domain is found at 556–652 (APLMVRLSVT…LSQPPSAVPS (97 aa)). Residues 893 to 900 (GLYLGYLK) form a highly conserved peptide sequence region. 3 disordered regions span residues 1134–1179 (VQKN…EVFL), 1321–1343 (LETP…YRQP), and 1361–1418 (KTSP…SSTL). The span at 1136-1146 (KNDSTSSNTDY) shows a compositional bias: polar residues. A compositionally biased stretch (polar residues) spans 1407-1418 (NEQVSEILSSTL).

In terms of biological role, required for vestibular-related functions. The sequence is that of Ankyrin repeat and fibronectin type-III domain-containing protein 1 (ankfn1) from Danio rerio (Zebrafish).